A 274-amino-acid polypeptide reads, in one-letter code: NADPH-dependent 7-cyano-7-deazaguanine reductase (274 aa).

80-82 serves as a coordination point for substrate; the sequence is VES. Position 82 to 83 (82 to 83) interacts with NADPH; sequence SK. C181 serves as the catalytic Thioimide intermediate. D188 serves as the catalytic Proton donor. 220-221 lines the substrate pocket; sequence HE. Residue 249-250 coordinates NADPH; that stretch reads RG.

Belongs to the GTP cyclohydrolase I family. QueF type 2 subfamily. As to quaternary structure, homodimer.

Its subcellular location is the cytoplasm. It carries out the reaction 7-aminomethyl-7-carbaguanine + 2 NADP(+) = 7-cyano-7-deazaguanine + 2 NADPH + 3 H(+). The protein operates within tRNA modification; tRNA-queuosine biosynthesis. Its function is as follows. Catalyzes the NADPH-dependent reduction of 7-cyano-7-deazaguanine (preQ0) to 7-aminomethyl-7-deazaguanine (preQ1). The sequence is that of NADPH-dependent 7-cyano-7-deazaguanine reductase from Burkholderia vietnamiensis (strain G4 / LMG 22486) (Burkholderia cepacia (strain R1808)).